A 119-amino-acid polypeptide reads, in one-letter code: Large ribosomal subunit protein uL18 (119 aa).

Belongs to the universal ribosomal protein uL18 family. In terms of assembly, part of the 50S ribosomal subunit; part of the 5S rRNA/L5/L18/L25 subcomplex. Contacts the 5S and 23S rRNAs.

This is one of the proteins that bind and probably mediate the attachment of the 5S RNA into the large ribosomal subunit, where it forms part of the central protuberance. This is Large ribosomal subunit protein uL18 from Borreliella afzelii (strain PKo) (Borrelia afzelii).